The sequence spans 388 residues: MSRSSYIFTSESVSEGHPDKVCDRISDTIVDLFLGKDPEARVACETLTTTNQIVLAGEVRCAAPIDDAEIEAAAREAVRDIGYEQDGFHWETATLQNFLHEQSVHIAQGVDASGDKDEGAGDQGIMFGYASDETPQLMPAPITYSHQILKRMAELRKSGARPEFEPDAKSQVTMRYENGVPAGVTSVVVSTQHKDGLTQDDIRELVRPVVQDVLPEGWFPPEEEFYVNPTGTFVIGGPDGDAGLTGRKIIVDTYGGAAPHGGGAFSGKDPTKVDRSAAYACRWLAKNVVAAELAKRCTIQVSYAIGVSKPLSLYVDLHGTGRVDEAKLEDALRQLADLSPRGIRTRLQLNKPIYARTAAYGHFGRTPTEDGGFSWERTDLADELRSLL.

H17 lines the ATP pocket. D19 is a binding site for Mg(2+). Position 45 (E45) interacts with K(+). L-methionine contacts are provided by E58 and Q102. The segment at 102–112 (QSVHIAQGVDA) is flexible loop. Residues 167-169 (DAK), D241, 247-248 (RK), A264, and K268 each bind ATP. D241 is an L-methionine binding site. An L-methionine-binding site is contributed by K272.

Belongs to the AdoMet synthase family. As to quaternary structure, homotetramer; dimer of dimers. The cofactor is Mg(2+). K(+) serves as cofactor.

Its subcellular location is the cytoplasm. It catalyses the reaction L-methionine + ATP + H2O = S-adenosyl-L-methionine + phosphate + diphosphate. The protein operates within amino-acid biosynthesis; S-adenosyl-L-methionine biosynthesis; S-adenosyl-L-methionine from L-methionine: step 1/1. Its function is as follows. Catalyzes the formation of S-adenosylmethionine (AdoMet) from methionine and ATP. The overall synthetic reaction is composed of two sequential steps, AdoMet formation and the subsequent tripolyphosphate hydrolysis which occurs prior to release of AdoMet from the enzyme. This is S-adenosylmethionine synthase from Maricaulis maris (strain MCS10) (Caulobacter maris).